We begin with the raw amino-acid sequence, 257 residues long: Pimeloyl-[acyl-carrier protein] methyl ester esterase (257 aa).

The region spanning 15–241 (HLVLLHGWGL…KAAHAPFVSH (227 aa)) is the AB hydrolase-1 domain. Residues W22, 82–83 (SL), and 143–147 (FLALQ) each bind substrate. The Nucleophile role is filled by S82. Residues D207 and H235 contribute to the active site. Residue H235 participates in substrate binding.

It belongs to the AB hydrolase superfamily. Carboxylesterase BioH family. Monomer.

The protein localises to the cytoplasm. It catalyses the reaction 6-carboxyhexanoyl-[ACP] methyl ester + H2O = 6-carboxyhexanoyl-[ACP] + methanol + H(+). The protein operates within cofactor biosynthesis; biotin biosynthesis. The physiological role of BioH is to remove the methyl group introduced by BioC when the pimeloyl moiety is complete. It allows to synthesize pimeloyl-ACP via the fatty acid synthetic pathway through the hydrolysis of the ester bonds of pimeloyl-ACP esters. This Klebsiella pneumoniae subsp. pneumoniae (strain ATCC 700721 / MGH 78578) protein is Pimeloyl-[acyl-carrier protein] methyl ester esterase.